Reading from the N-terminus, the 317-residue chain is Taste receptor type 2 member 7 (317 aa).

Topologically, residues 1–9 (MTDKVQTTL) are extracellular. The helical transmembrane segment at 10–30 (LFLAIGEFSVGILGNAFIGLV) threads the bilayer. Residues 31–55 (NCMDWVKKRKIASIDLILTSLAISR) lie on the Cytoplasmic side of the membrane. Residues 56–76 (ICLLCVILLDCFMLVLYPDVY) form a helical membrane-spanning segment. The Extracellular portion of the chain corresponds to 77–94 (ATGKQMRIIDFFWTLTNH). The helical transmembrane segment at 95–115 (LSIWFATCLSIYYFFKIANFF) threads the bilayer. Residues 116-128 (HPLFLWMKWRIDR) lie on the Cytoplasmic side of the membrane. Residues 129–149 (VISWILLGCMVLSVFINLPAT) form a helical membrane-spanning segment. Residues 150–187 (ENLNADFRRCVKAKRKTNLTWSCRVTKAQHASTKLFLN) lie on the Extracellular side of the membrane. N-linked (GlcNAc...) asparagine glycosylation occurs at Asn167. Residues 188-208 (LVTLLPFSVCLVSFFLLILSL) form a helical membrane-spanning segment. At 209 to 235 (WRHIRRMQLSATGCRDPSTEAHVRALK) the chain is on the cytoplasmic side. A helical membrane pass occupies residues 236-256 (AVISFLFLFIAYYLSFLIATS). Residues 257-266 (SYFIPETELA) are Extracellular-facing. The helical transmembrane segment at 267–287 (VIFGEFIALIYPSSHSFILIL) threads the bilayer. The Cytoplasmic portion of the chain corresponds to 288 to 317 (GNNKLRRASLKVLWTVMSILKGRKFQQKQI).

Belongs to the G-protein coupled receptor T2R family.

It localises to the membrane. Gustducin-coupled receptor implicated in the perception of bitter compounds in the oral cavity and the gastrointestinal tract. Signals through PLCB2 and the calcium-regulated cation channel TRPM5. In Papio hamadryas (Hamadryas baboon), this protein is Taste receptor type 2 member 7 (TAS2R7).